Consider the following 444-residue polypeptide: Phosphoglucosamine mutase (444 aa).

Serine 102 functions as the Phosphoserine intermediate in the catalytic mechanism. Mg(2+) is bound by residues serine 102, aspartate 241, aspartate 243, and aspartate 245. Residue serine 102 is modified to Phosphoserine.

It belongs to the phosphohexose mutase family. Requires Mg(2+) as cofactor. Post-translationally, activated by phosphorylation.

The enzyme catalyses alpha-D-glucosamine 1-phosphate = D-glucosamine 6-phosphate. In terms of biological role, catalyzes the conversion of glucosamine-6-phosphate to glucosamine-1-phosphate. The polypeptide is Phosphoglucosamine mutase (Mannheimia succiniciproducens (strain KCTC 0769BP / MBEL55E)).